The sequence spans 261 residues: Cytochrome c oxidase subunit 3 (261 aa).

The Mitochondrial matrix portion of the chain corresponds to 1–15 (MAHQAHSYHMVDPSP). The helical transmembrane segment at 16–34 (WPIFGAAAALLTTSGLIMW) threads the bilayer. The Mitochondrial intermembrane portion of the chain corresponds to 35 to 40 (FHYSST). A helical transmembrane segment spans residues 41–66 (TLLTMGLLSMLLVMLQWWRDVVREST). Topologically, residues 67–72 (FQGHHT) are mitochondrial matrix. Residues 73–105 (PTVQKGLRYGMILFITSEAFFFLGFFWAFFHSS) traverse the membrane as a helical segment. The Mitochondrial intermembrane segment spans residues 106–128 (LAPTPELGGQWPPTGVKPLNPLE). Residues 129–152 (VPLLNTAILLASGVTVTWAHHSIT) form a helical membrane-spanning segment. At 153 to 155 (EGN) the chain is on the mitochondrial matrix side. The helical transmembrane segment at 156–183 (RKQAIHALTLTILLGFYFTALQAMEYHE) threads the bilayer. Residues 184–190 (ASFSIAD) are Mitochondrial intermembrane-facing. A helical membrane pass occupies residues 191-223 (SVYGSTFFVATGFHGLHVIIGSSFLTVCLLRLI). The Mitochondrial matrix segment spans residues 224 to 232 (KFHFTPNHH). Residues 233 to 256 (FGFEAAAWYWHFVDIIWLFLYMSM) form a helical membrane-spanning segment. Residues 257–261 (YWWGS) lie on the Mitochondrial intermembrane side of the membrane.

Belongs to the cytochrome c oxidase subunit 3 family. As to quaternary structure, component of the cytochrome c oxidase (complex IV, CIV), a multisubunit enzyme composed of 14 subunits. The complex is composed of a catalytic core of 3 subunits MT-CO1, MT-CO2 and MT-CO3, encoded in the mitochondrial DNA, and 11 supernumerary subunits COX4I, COX5A, COX5B, COX6A, COX6B, COX6C, COX7A, COX7B, COX7C, COX8 and NDUFA4, which are encoded in the nuclear genome. The complex exists as a monomer or a dimer and forms supercomplexes (SCs) in the inner mitochondrial membrane with NADH-ubiquinone oxidoreductase (complex I, CI) and ubiquinol-cytochrome c oxidoreductase (cytochrome b-c1 complex, complex III, CIII), resulting in different assemblies (supercomplex SCI(1)III(2)IV(1) and megacomplex MCI(2)III(2)IV(2)).

It is found in the mitochondrion inner membrane. The catalysed reaction is 4 Fe(II)-[cytochrome c] + O2 + 8 H(+)(in) = 4 Fe(III)-[cytochrome c] + 2 H2O + 4 H(+)(out). Functionally, component of the cytochrome c oxidase, the last enzyme in the mitochondrial electron transport chain which drives oxidative phosphorylation. The respiratory chain contains 3 multisubunit complexes succinate dehydrogenase (complex II, CII), ubiquinol-cytochrome c oxidoreductase (cytochrome b-c1 complex, complex III, CIII) and cytochrome c oxidase (complex IV, CIV), that cooperate to transfer electrons derived from NADH and succinate to molecular oxygen, creating an electrochemical gradient over the inner membrane that drives transmembrane transport and the ATP synthase. Cytochrome c oxidase is the component of the respiratory chain that catalyzes the reduction of oxygen to water. Electrons originating from reduced cytochrome c in the intermembrane space (IMS) are transferred via the dinuclear copper A center (CU(A)) of subunit 2 and heme A of subunit 1 to the active site in subunit 1, a binuclear center (BNC) formed by heme A3 and copper B (CU(B)). The BNC reduces molecular oxygen to 2 water molecules using 4 electrons from cytochrome c in the IMS and 4 protons from the mitochondrial matrix. The protein is Cytochrome c oxidase subunit 3 (MT-CO3) of Gallus gallus (Chicken).